The following is a 760-amino-acid chain: Complement C2 (760 aa).

The signal sequence occupies residues 1–18 (MAPLLALFYLLQLGPGLA). Sushi domains follow at residues 20-90 (LFCN…AVCK), 92-151 (VRCL…VCDN), and 154-212 (SHCP…ICRQ). Cystine bridges form between Cys-22–Cys-62, Cys-49–Cys-89, Cys-94–Cys-136, Cys-122–Cys-149, Cys-156–Cys-197, and Cys-182–Cys-210. Residues Asn-27 and Asn-32 are each glycosylated (N-linked (GlcNAc...) asparagine). A glycan (N-linked (GlcNAc...) asparagine) is linked at Asn-117. One can recognise a VWFA domain in the interval 261 to 459 (NLYLLLDASQ…KALQQIFEHM (199 aa)). The MIDAS-like motif motif lies at 267 to 271 (DASQS). Residues Ser-269 and Ser-271 each coordinate Mg(2+). N-linked (GlcNAc...) asparagine glycosylation is found at Asn-297 and Asn-340. A Mg(2+)-binding site is contributed by Thr-344. 5 disulfide bridges follow: Cys-470/Cys-590, Cys-499/Cys-515, Cys-593/Cys-609, Cys-647/Cys-674, and Cys-685/Cys-715. Residues 471–752 (GVGNMSANAS…LQPWLRQHLD (282 aa)) form the Peptidase S1 domain. Asn-474 and Asn-478 each carry an N-linked (GlcNAc...) asparagine glycan. Catalysis depends on charge relay system residues His-514 and Asp-570. A glycan (N-linked (GlcNAc...) asparagine) is linked at Asn-663. Residue Ser-689 is the Charge relay system of the active site.

It belongs to the peptidase S1 family. As to quaternary structure, serine protease component of the C3 convertase, also named C4bC2b, composed of the serine protease complement C2b and complement C4b. Serine protease component of the C5 convertase, also named C4bC2bC3b, composed of the serine protease complement C2b, complement C3b, as well as complement C4b. The cofactor is Mg(2+). Mn(2+) serves as cofactor. In terms of processing, cleaved and activated by different proteases depending on the complement pathway to generate complement C2a and serine protease complement C2b chains. Cleaved and activated by C1S following activation by the classical complement system. Cleaved and activated by MASP2 following activation by the lectin complement system. Cleaved and activated by GZMK following activation by the GZMK complement system.

It localises to the secreted. The protein localises to the cell surface. It catalyses the reaction Selective cleavage of Arg-|-Ser bond in complement component C3 alpha-chain to form C3a and C3b, and Arg-|-Xaa bond in complement component C5 alpha-chain to form C5a and C5b.. Its function is as follows. Precursor of the catalytic component of the C3 and C5 convertase complexes, which are part of the complement pathway, a cascade of proteins that leads to phagocytosis and breakdown of pathogens and signaling that strengthens the adaptive immune system. Component C2 is part of the classical, lectin and GZMK complement systems. Functionally, catalytic component of the complement C3 and C5 convertase complexes. Following complement activation, recruited to the surface of pathogens by complement C4b opsonin to form the C3 convertase, or C3b and C4b opsonins to form the C5 convertase. As part of the C3 convertase, cleaves and activate C3 into C3a anaphylatoxin and C3b opsonin, the next components of the complement pathways. As part of the C5 convertase, cleaves and activate C5 into C5a anaphylatoxin and C5b component of the membrane attack complex. This chain is Complement C2, found in Mus musculus (Mouse).